We begin with the raw amino-acid sequence, 93 residues long: Large ribosomal subunit protein uL23 (93 aa).

Belongs to the universal ribosomal protein uL23 family. In terms of assembly, part of the 50S ribosomal subunit. Contacts protein L29, and trigger factor when it is bound to the ribosome.

One of the early assembly proteins it binds 23S rRNA. One of the proteins that surrounds the polypeptide exit tunnel on the outside of the ribosome. Forms the main docking site for trigger factor binding to the ribosome. The protein is Large ribosomal subunit protein uL23 of Campylobacter jejuni subsp. jejuni serotype O:6 (strain 81116 / NCTC 11828).